The primary structure comprises 768 residues: DNA ligase (768 aa).

Residues 30 to 34 (DAEYD), 79 to 80 (SL), and glutamate 190 each bind NAD(+). The active-site N6-AMP-lysine intermediate is the lysine 192. Residues arginine 213, glutamate 250, lysine 367, and lysine 391 each contribute to the NAD(+) site. Residues cysteine 485, cysteine 488, cysteine 503, and cysteine 509 each coordinate Zn(2+). One can recognise a BRCT domain in the interval 678-767 (AAEQPLSGLS…IPPEIQARMQ (90 aa)).

It belongs to the NAD-dependent DNA ligase family. LigA subfamily. Requires Mg(2+) as cofactor. Mn(2+) serves as cofactor.

It catalyses the reaction NAD(+) + (deoxyribonucleotide)n-3'-hydroxyl + 5'-phospho-(deoxyribonucleotide)m = (deoxyribonucleotide)n+m + AMP + beta-nicotinamide D-nucleotide.. DNA ligase that catalyzes the formation of phosphodiester linkages between 5'-phosphoryl and 3'-hydroxyl groups in double-stranded DNA using NAD as a coenzyme and as the energy source for the reaction. It is essential for DNA replication and repair of damaged DNA. This chain is DNA ligase, found in Magnetococcus marinus (strain ATCC BAA-1437 / JCM 17883 / MC-1).